A 99-amino-acid chain; its full sequence is Nucleoid-associated protein SZO_16661 (99 aa).

It belongs to the YbaB/EbfC family. Homodimer.

The protein localises to the cytoplasm. The protein resides in the nucleoid. Functionally, binds to DNA and alters its conformation. May be involved in regulation of gene expression, nucleoid organization and DNA protection. The protein is Nucleoid-associated protein SZO_16661 of Streptococcus equi subsp. zooepidemicus (strain H70).